The following is a 415-amino-acid chain: Glucose-6-phosphate isomerase (415 aa).

Catalysis depends on glutamate 267, which acts as the Proton donor. Active-site residues include histidine 293 and lysine 406.

Belongs to the GPI family.

It localises to the cytoplasm. The enzyme catalyses alpha-D-glucose 6-phosphate = beta-D-fructose 6-phosphate. The protein operates within carbohydrate biosynthesis; gluconeogenesis. It functions in the pathway carbohydrate degradation; glycolysis; D-glyceraldehyde 3-phosphate and glycerone phosphate from D-glucose: step 2/4. Catalyzes the reversible isomerization of glucose-6-phosphate to fructose-6-phosphate. This Thermus thermophilus (strain ATCC 27634 / DSM 579 / HB8) protein is Glucose-6-phosphate isomerase.